We begin with the raw amino-acid sequence, 850 residues long: MEMNLLQKLCVVCSKCNEYAMELECLKYCDPNVLLAESTPFKRNAAAIVYLYRKIYPEVVAQNRTQSSLLTLYLEMLLKALHEDTALLDRALMAYSRQPDRAAFYRTVLRLDRCDRHHTVELQFTDNVRFSVSLATLNDIERFLCKMNYVYGILAPEAGLEVCAQLLELLRRLCGISPVARQEVYVEGTTCAQCYEELTIIPNQGRSLNKRLQGLLCNHIAVHRPSSQSDVNIQTVEQDLLDLTTRIPHLAGVLSALKSLFSSSSAYHSYIQEAEEALREYNLFTDIPERIYSLSDFTYWSRTSEVIVKRVGITIQQLNVYHQLCRALMNGISRHLYGEDVEDIFVLGEKALDGEERMFVGSVFAAPNRIIDLITSLSIQAFEDNPVFNKLHESNEMYTKIKHILEEIRRPLPDGTGGDGPEGEAIHLRGREAMSGTGTTLMTASNSSNSSTHSQRNNGGGGRARGGGKKVVGGGVNGQDGDGSENGLRVRNCDEHEALDLVDARSRIHNVTREVNVRKRAYLQKVSEVGYGKVIRCIKTQERLTSKLIDVNLVGPLCLDFISKLMNGFLYRSQYHQDQDVVDVGDQFTYDEHLYVVNNLIHKSLPVESLPLLGQQIYELCNGPLFTHCTDRYPLSHNVDMAYACDNAGVLPHVKDDLVKCAEGTVYPSEWMVVKYMGFFNFSDCQDLNVLQKEMWMHVRELVLSVALYNETFGKQLSIACLRDELHPDRDVILTYNKEWPLLLRHEGSLYKSKDLYLLLYRHLSRPDESGDVPTAPVAKPSTLTAAAAVSGVFREPDRPWLPSPYPSSSTAGVSRRVRATRKRPRRASSLLDLARDEHGIQDLVPGSLR.

The C3H1-type zinc-finger motif lies at 191-219 (CAQCYEELTIIPNQGRSLNKRLQGLLCNH). The disordered stretch occupies residues 438–489 (GTTLMTASNSSNSSTHSQRNNGGGGRARGGGKKVVGGGVNGQDGDGSENGLR). Residues 439 to 457 (TTLMTASNSSNSSTHSQRN) show a composition bias toward low complexity. The span at 458-481 (NGGGGRARGGGKKVVGGGVNGQDG) shows a compositional bias: gly residues. 709–716 (YNETFGKQ) is a binding site for ATP. The interval 801–831 (WLPSPYPSSSTAGVSRRVRATRKRPRRASSL) is disordered. Residues 816–827 (RRVRATRKRPRR) show a composition bias toward basic residues. The Nuclear localization signal signature appears at 822-827 (RKRPRR).

This sequence belongs to the herpesviridae TRM1 protein family. In terms of assembly, associates with TRM2 and TRM3 to form the tripartite terminase complex. Interacts with portal protein.

Its subcellular location is the host nucleus. In terms of biological role, component of the molecular motor that translocates viral genomic DNA in empty capsid during DNA packaging. Forms a tripartite terminase complex together with TRM2 and TRM3 in the host cytoplasm. Once the complex reaches the host nucleus, it interacts with the capsid portal vertex. This portal forms a ring in which genomic DNA is translocated into the capsid. TRM1 carries an endonuclease activity that plays an important role for the cleavage of concatemeric viral DNA into unit length genomes. The polypeptide is Tripartite terminase subunit 1 (Homo sapiens (Human)).